A 366-amino-acid polypeptide reads, in one-letter code: S-adenosylmethionine synthase 1 (366 aa).

K(+) is bound at residue glutamate 18. L-methionine contacts are provided by glutamate 31 and glutamine 74. Residues 142–144, 210–213, aspartate 221, 227–228, alanine 244, lysine 248, and lysine 252 contribute to the ATP site; these read DGN, SGRF, and RK. Aspartate 221 contacts L-methionine. Residue lysine 252 coordinates L-methionine.

This sequence belongs to the AdoMet synthase family. In terms of assembly, homotetramer. Mn(2+) is required as a cofactor. Mg(2+) serves as cofactor. It depends on Co(2+) as a cofactor. Requires K(+) as cofactor.

It localises to the cytoplasm. The enzyme catalyses L-methionine + ATP + H2O = S-adenosyl-L-methionine + phosphate + diphosphate. It functions in the pathway amino-acid biosynthesis; S-adenosyl-L-methionine biosynthesis; S-adenosyl-L-methionine from L-methionine: step 1/1. Catalyzes the formation of S-adenosylmethionine from methionine and ATP. The reaction comprises two steps that are both catalyzed by the same enzyme: formation of S-adenosylmethionine (AdoMet) and triphosphate, and subsequent hydrolysis of the triphosphate. The protein is S-adenosylmethionine synthase 1 (SAMS1) of Pisum sativum (Garden pea).